Consider the following 163-residue polypeptide: Probable metallophosphoesterase MG207 (163 aa).

Residues aspartate 9, histidine 11, aspartate 34, asparagine 53, histidine 75, histidine 107, and histidine 109 each contribute to the Mn(2+) site.

Belongs to the metallophosphoesterase superfamily. YfcE family. It depends on Mn(2+) as a cofactor.

This is Probable metallophosphoesterase MG207 from Mycoplasma genitalium (strain ATCC 33530 / DSM 19775 / NCTC 10195 / G37) (Mycoplasmoides genitalium).